The primary structure comprises 204 residues: Guanylate kinase (204 aa).

Residues 5–184 (GLLIVLSGPS…AVQRIKDIIA (180 aa)) enclose the Guanylate kinase-like domain. 12 to 19 (GPSGVGKG) serves as a coordination point for ATP.

The protein belongs to the guanylate kinase family.

The protein localises to the cytoplasm. It carries out the reaction GMP + ATP = GDP + ADP. Essential for recycling GMP and indirectly, cGMP. The sequence is that of Guanylate kinase from Enterococcus faecalis (strain ATCC 700802 / V583).